The following is a 455-amino-acid chain: Probable ATP-dependent RNA helicase DDX47 (455 aa).

Basic and acidic residues predominate over residues 1 to 10 (MAAPEEHDSP). The interval 1 to 20 (MAAPEEHDSPTEASQPIVEE) is disordered. The residue at position 2 (A2) is an N-acetylalanine. S9 bears the Phosphoserine mark. Residues 24 to 52 (KTFKDLGVTDVLCEACDQLGWTKPTKIQI) carry the Q motif motif. The 172-residue stretch at 55–226 (IPLALQGRDI…RAALKNPVKC (172 aa)) folds into the Helicase ATP-binding domain. Residue 68–75 (AETGSGKT) participates in ATP binding. Phosphothreonine is present on T149. A DEAD box motif is present at residues 174–177 (DEAD). In terms of domain architecture, Helicase C-terminal spans 237–397 (KLQQYYIFIP…GFPTQDDEVM (161 aa)). Basic and acidic residues predominate over residues 413 to 428 (ELREHGEKKKRSREDA). The tract at residues 413–455 (ELREHGEKKKRSREDAGDNDDTEGAIGVRNKVAGGKMKKRKGR) is disordered. At S424 the chain carries Phosphoserine.

This sequence belongs to the DEAD box helicase family. DDX47/RRP3 subfamily. Interacts with AGO1 and AGO2. Interacts with GABARAP. Interacts with NOL8; the interaction is RNA-dependent. In terms of tissue distribution, expressed in skin, lung and breast. Also expressed in the brain.

The protein resides in the nucleus. The protein localises to the nucleolus. It carries out the reaction ATP + H2O = ADP + phosphate + H(+). Its function is as follows. Required for efficient ribosome biogenesis. May have a role in mRNA splicing. Involved in apoptosis. This is Probable ATP-dependent RNA helicase DDX47 (DDX47) from Homo sapiens (Human).